The primary structure comprises 332 residues: Glycerol-3-phosphate dehydrogenase [NAD(P)+] (332 aa).

W11, R30, and K108 together coordinate NADPH. K108, G137, and S139 together coordinate sn-glycerol 3-phosphate. A141 serves as a coordination point for NADPH. Residues K192, D245, S255, R256, and N257 each contribute to the sn-glycerol 3-phosphate site. K192 functions as the Proton acceptor in the catalytic mechanism. Position 256 (R256) interacts with NADPH. NADPH-binding residues include V280 and E282.

It belongs to the NAD-dependent glycerol-3-phosphate dehydrogenase family.

It is found in the cytoplasm. It catalyses the reaction sn-glycerol 3-phosphate + NAD(+) = dihydroxyacetone phosphate + NADH + H(+). The catalysed reaction is sn-glycerol 3-phosphate + NADP(+) = dihydroxyacetone phosphate + NADPH + H(+). It participates in membrane lipid metabolism; glycerophospholipid metabolism. Functionally, catalyzes the reduction of the glycolytic intermediate dihydroxyacetone phosphate (DHAP) to sn-glycerol 3-phosphate (G3P), the key precursor for phospholipid synthesis. In Burkholderia cenocepacia (strain ATCC BAA-245 / DSM 16553 / LMG 16656 / NCTC 13227 / J2315 / CF5610) (Burkholderia cepacia (strain J2315)), this protein is Glycerol-3-phosphate dehydrogenase [NAD(P)+].